A 244-amino-acid polypeptide reads, in one-letter code: ATP synthase subunit a, chloroplastic (244 aa).

A run of 5 helical transmembrane segments spans residues 35 to 55, 92 to 112, 131 to 151, 196 to 216, and 217 to 237; these read QVLI…VIAV, VPFI…GALL, INTT…AGLS, LVVV…VMFL, and GLFT…AYIG.

Belongs to the ATPase A chain family. F-type ATPases have 2 components, CF(1) - the catalytic core - and CF(0) - the membrane proton channel. CF(1) has five subunits: alpha(3), beta(3), gamma(1), delta(1), epsilon(1). CF(0) has four main subunits: a, b, b' and c.

The protein resides in the plastid. The protein localises to the chloroplast thylakoid membrane. Key component of the proton channel; it plays a direct role in the translocation of protons across the membrane. In Gossypium hirsutum (Upland cotton), this protein is ATP synthase subunit a, chloroplastic.